The following is a 305-amino-acid chain: UDP-3-O-acyl-N-acetylglucosamine deacetylase (305 aa).

Positions 78, 237, and 241 each coordinate Zn(2+). Histidine 264 functions as the Proton donor in the catalytic mechanism.

Belongs to the LpxC family. It depends on Zn(2+) as a cofactor.

It carries out the reaction a UDP-3-O-[(3R)-3-hydroxyacyl]-N-acetyl-alpha-D-glucosamine + H2O = a UDP-3-O-[(3R)-3-hydroxyacyl]-alpha-D-glucosamine + acetate. Its pathway is glycolipid biosynthesis; lipid IV(A) biosynthesis; lipid IV(A) from (3R)-3-hydroxytetradecanoyl-[acyl-carrier-protein] and UDP-N-acetyl-alpha-D-glucosamine: step 2/6. In terms of biological role, catalyzes the hydrolysis of UDP-3-O-myristoyl-N-acetylglucosamine to form UDP-3-O-myristoylglucosamine and acetate, the committed step in lipid A biosynthesis. In Burkholderia cenocepacia (strain ATCC BAA-245 / DSM 16553 / LMG 16656 / NCTC 13227 / J2315 / CF5610) (Burkholderia cepacia (strain J2315)), this protein is UDP-3-O-acyl-N-acetylglucosamine deacetylase.